The primary structure comprises 251 residues: HTH-type transcriptional regulator UlaR (251 aa).

Positions 3 to 58 constitute an HTH deoR-type domain; sequence EAQRHQILLEMLAQLGFVTVEKVVERLGISPATARRDINKLGESGKLKKVRNGAEA. A DNA-binding region (H-T-H motif) is located at residues 20–39; that stretch reads VTVEKVVERLGISPATARRD.

Its subcellular location is the cytoplasm. Its function is as follows. Represses ulaG and the ulaABCDEF operon. This is HTH-type transcriptional regulator UlaR from Shigella flexneri.